Reading from the N-terminus, the 495-residue chain is Heat stress transcription factor A-1a (495 aa).

Residues 50 to 144 mediate DNA binding; sequence PPPFLSKTYD…LLKKISRRKS (95 aa). Residues 140–164 are disordered; the sequence is SRRKSVQGHGSSSSNPQSQQLSQGQ. Residues 146–164 are compositionally biased toward low complexity; it reads QGHGSSSSNPQSQQLSQGQ. Positions 172–238 are hydrophobic repeat HR-A/B; sequence SCVEVGKFGL…QIMSFLAKAV (67 aa). The interval 255–288 is disordered; sequence NMHVTEANKKRRLREDSTAATESNSHSHSLEASD. A Nuclear localization signal motif is present at residues 262–268; sequence NKKRRLR. A compositionally biased stretch (polar residues) spans 272–281; sequence TAATESNSHS. The AHA signature appears at 433-442; the sequence is FEFLEEYMPE. Residues 445–477 are disordered; sequence VFGDATTLENNNNNNNNNNNNNNNNNNNNTNGR. The segment covering 454-473 has biased composition (low complexity); sequence NNNNNNNNNNNNNNNNNNNN. The Nuclear export signal motif lies at 482–489; sequence LIEELGLL.

This sequence belongs to the HSF family. Class A subfamily. As to quaternary structure, homotrimer. Interacts with HSP70-1 and HSP70-4. Binds to CRK1. Binds to HSBP. Exhibits temperature-dependent phosphorylation. Phosphorylated by CRK1. In terms of tissue distribution, constitutively expressed.

It is found in the cytoplasm. The protein localises to the nucleus. Its function is as follows. Transcriptional activator that specifically binds DNA sequence 5'-AGAAnnTTCT-3' known as heat shock promoter elements (HSE). In Arabidopsis thaliana (Mouse-ear cress), this protein is Heat stress transcription factor A-1a (HSFA1A).